Reading from the N-terminus, the 295-residue chain is Aspartate carbamoyltransferase catalytic subunit (295 aa).

Residues Arg49 and Thr50 each coordinate carbamoyl phosphate. Lys77 serves as a coordination point for L-aspartate. 3 residues coordinate carbamoyl phosphate: Arg99, His127, and Gln130. Residues Arg161 and Arg212 each contribute to the L-aspartate site. Gly251 and Pro252 together coordinate carbamoyl phosphate.

This sequence belongs to the aspartate/ornithine carbamoyltransferase superfamily. ATCase family. As to quaternary structure, heterododecamer (2C3:3R2) of six catalytic PyrB chains organized as two trimers (C3), and six regulatory PyrI chains organized as three dimers (R2).

The catalysed reaction is carbamoyl phosphate + L-aspartate = N-carbamoyl-L-aspartate + phosphate + H(+). It participates in pyrimidine metabolism; UMP biosynthesis via de novo pathway; (S)-dihydroorotate from bicarbonate: step 2/3. In terms of biological role, catalyzes the condensation of carbamoyl phosphate and aspartate to form carbamoyl aspartate and inorganic phosphate, the committed step in the de novo pyrimidine nucleotide biosynthesis pathway. In Campylobacter jejuni subsp. jejuni serotype O:2 (strain ATCC 700819 / NCTC 11168), this protein is Aspartate carbamoyltransferase catalytic subunit.